Here is a 399-residue protein sequence, read N- to C-terminus: MTEKADLQPILDRAAAGGRITPEEALDLYRDAPLHALGAAADAVRRRRYAGTEHIATYIIERNINYTNVCVTACKFCAFYAAPKDTKKGWSRDLDDILRRCAETVELGGTQIMFQGGHHPDYGVEYYEEHFAAIKKEFPQLVIHSLGASEVEHMARISKVSVEEAIRRIHAAGLDSFAGAGAELLPERPRKAIAPLKESGERWLEIMEIAHGLGVESTSTMLMGTGETNAERIEHLRMIRDVQDRTGGFRAFIPYTYQPENNHLKGRTQATLFEYLRMIAIARVFLDNVAHIQGSWLTTGKEVGQLSLHYGADDLGSIMLEENVVSSAGAKHRSNRLEIIDLIRKAGRVPAQRATTYEHLVVHDDPANDPVDERVVSHISSTAIEGGTAHPELKLLAPN.

The Radical SAM core domain occupies 56–288 (ATYIIERNIN…IAIARVFLDN (233 aa)). The [4Fe-4S] cluster site is built by C70, C74, and C77.

It belongs to the radical SAM superfamily. MqnC family. Requires [4Fe-4S] cluster as cofactor.

It catalyses the reaction dehypoxanthine futalosine + S-adenosyl-L-methionine = cyclic dehypoxanthinylfutalosinate + 5'-deoxyadenosine + L-methionine + H(+). The protein operates within quinol/quinone metabolism; menaquinone biosynthesis. Functionally, radical SAM enzyme that catalyzes the cyclization of dehypoxanthine futalosine (DHFL) into cyclic dehypoxanthine futalosine (CDHFL), a step in the biosynthesis of menaquinone (MK, vitamin K2). The chain is Cyclic dehypoxanthine futalosine synthase from Streptomyces coelicolor (strain ATCC BAA-471 / A3(2) / M145).